A 299-amino-acid chain; its full sequence is Ribosomal RNA small subunit methyltransferase H (299 aa).

S-adenosyl-L-methionine-binding positions include 36 to 38, Asp55, Asp103, and Gln110; that span reads GGH. 2 stretches are compositionally biased toward basic and acidic residues: residues 268-282 and 289-299; these read KPVRPSEEEIRENPR and RAAERIEKGGD. A disordered region spans residues 268-299; it reads KPVRPSEEEIRENPRARSGRLRAAERIEKGGD.

This sequence belongs to the methyltransferase superfamily. RsmH family.

It is found in the cytoplasm. The catalysed reaction is cytidine(1402) in 16S rRNA + S-adenosyl-L-methionine = N(4)-methylcytidine(1402) in 16S rRNA + S-adenosyl-L-homocysteine + H(+). Specifically methylates the N4 position of cytidine in position 1402 (C1402) of 16S rRNA. In Thermotoga sp. (strain RQ2), this protein is Ribosomal RNA small subunit methyltransferase H.